The following is a 38-amino-acid chain: Large ribosomal subunit protein bL36 (38 aa).

Belongs to the bacterial ribosomal protein bL36 family.

The polypeptide is Large ribosomal subunit protein bL36 (Acinetobacter baylyi (strain ATCC 33305 / BD413 / ADP1)).